Here is a 1259-residue protein sequence, read N- to C-terminus: Autism susceptibility gene 2 protein (1259 aa).

Disordered stretches follow at residues 1 to 87 (MDGP…EEDI), 108 to 285 (LKPQ…QDCC), 299 to 470 (CPQV…PPPP), 771 to 1027 (PNSM…MTVG), and 1119 to 1146 (REPH…HERG). The span at 8–17 (HGLRKKRRSR) shows a compositional bias: basic residues. The segment covering 28–41 (GGLGAGAAGGGGAG) has biased composition (gly residues). Positions 108–118 (LKPQERVEKRQ) are enriched in basic and acidic residues. The segment covering 136-147 (HSKKSRLSHPHH) has biased composition (basic residues). Over residues 148–158 (YSSDRENDRNL) the composition is skewed to basic and acidic residues. A compositionally biased stretch (polar residues) spans 177–192 (PGQNSCRDSDSESASG). Over residues 276-285 (RSQEKSQDCC) the composition is skewed to basic and acidic residues. The interval 289–472 (IFEPVVLKDP…PTALPPPPPL (184 aa)) is important for regulation of lamellipodia formation. 2 stretches are compositionally biased toward pro residues: residues 331 to 345 (PPQP…PQGP) and 353 to 365 (APQP…PRPQ). The span at 386 to 410 (SLSQPLSAYNSSSLSLNSLSSSRSS) shows a compositional bias: low complexity. A compositionally biased stretch (polar residues) spans 436 to 447 (PNHSPLHSFTPT). The segment covering 801–810 (PSFPTPPPWL) has biased composition (pro residues). Basic and acidic residues-rich tracts occupy residues 813–850 (GELE…VEKR), 876–935 (IRAH…EAKQ), and 960–993 (REAE…HDLP). The span at 1125-1134 (SHHHHHHHHP) shows a compositional bias: basic residues. 2 positions are modified to phosphoserine: Ser1198 and Ser1233. The interval 1217-1259 (LSAPPPLISTLGGRPVSPRRTTPLSAEIRERPPSHTLKDIEAR) is disordered. Basic and acidic residues predominate over residues 1243–1259 (EIRERPPSHTLKDIEAR).

It belongs to the AUTS2 family. In terms of assembly, component of a PRC1-like complex that contains PCGF5, RNF2, CSNK2B, RYBP and AUTS2. Within this complex, interacts directly with PCGF5 and CSNK2B. Interacts with the histone acetyltransferase EP300/p300. Interacts (via Pro-rich region) with PREX1, DOCK1 and ELMO2. As to expression, strongly expressed in brain, skeletal muscle and kidney. Also expressed in placenta, lung and leukocytes.

It is found in the nucleus. The protein resides in the cytoplasm. Its subcellular location is the cytoskeleton. It localises to the cell projection. The protein localises to the growth cone. Component of a Polycomb group (PcG) multiprotein PRC1-like complex, a complex class required to maintain the transcriptionally repressive state of many genes, including Hox genes, throughout development. PcG PRC1 complex acts via chromatin remodeling and modification of histones; it mediates monoubiquitination of histone H2A 'Lys-119', rendering chromatin heritably changed in its expressibility. The PRC1-like complex that contains PCGF5, RNF2, CSNK2B, RYBP and AUTS2 has decreased histone H2A ubiquitination activity, due to the phosphorylation of RNF2 by CSNK2B. As a consequence, the complex mediates transcriptional activation. In the cytoplasm, plays a role in axon and dendrite elongation and in neuronal migration during embryonic brain development. Promotes reorganization of the actin cytoskeleton, lamellipodia formation and neurite elongation via its interaction with RAC guanine nucleotide exchange factors, which then leads to the activation of RAC1. This chain is Autism susceptibility gene 2 protein (AUTS2), found in Homo sapiens (Human).